Reading from the N-terminus, the 457-residue chain is Multidrug resistance protein MdtK (457 aa).

The next 12 helical transmembrane spans lie at 11–31 (LLALAIPVIIAQIAQTAMGFV), 53–73 (IWLPTILFGHGLLLALTPVIA), 93–113 (WLVAGLSVLIIAVLYNAGHII), 127–147 (AIGYLHAIMWGAPGYLCFQVL), 160–180 (GMVIGFIGLLINIPVNYIFIY), 188–208 (LGGVGCGVATASVYWIMYLLM), 239–259 (IAIGMPIALALFFEVTLFAVV), 277–297 (ALNFSSLMFVLPMSLGVAATI), 316–336 (RTAIAVGMAMATCTAIFTIVL), 357–377 (LMLLAALYQISDSVQVIGSGV), 387–407 (IFFITFIAYWLLGLPTGYLLA), and 418–438 (PSGFWIGFIIGLTSAAIMMAL).

This sequence belongs to the multi antimicrobial extrusion (MATE) (TC 2.A.66.1) family. MdtK subfamily.

It localises to the cell inner membrane. Its function is as follows. Multidrug efflux pump that functions probably as a Na(+)/drug antiporter. This Edwardsiella ictaluri (strain 93-146) protein is Multidrug resistance protein MdtK.